The chain runs to 325 residues: Serpentine receptor class gamma-16 (325 aa).

A run of 7 helical transmembrane segments spans residues 25-45, 65-85, 87-107, 144-164, 187-207, 232-252, and 264-284; these read FCLY…ILLI, VVSL…MFIP, LCPL…MYYW, LAVT…WNLL, WASL…FTII, FVSL…LIFV, and LLFQ…IIML.

This sequence belongs to the nematode receptor-like protein srg family.

The protein localises to the membrane. This chain is Serpentine receptor class gamma-16 (srg-16), found in Caenorhabditis elegans.